The chain runs to 1533 residues: Glycogen debranching enzyme (1533 aa).

Serine 64 bears the Phosphoserine mark. Active-site residues include aspartate 527, histidine 530, and aspartate 628.

This sequence belongs to the glycogen debranching enzyme family. As to quaternary structure, monomer. Interacts with NHLRC1/malin. In terms of processing, ubiquitinated. In terms of tissue distribution, ubiquitous. Expressed in striated skeletal muscle, heart, liver, spleen, skin, spinal cord, lung, kidney and testicle.

The protein resides in the cytoplasm. The catalysed reaction is Transfers a segment of a (1-&gt;4)-alpha-D-glucan to a new position in an acceptor, which may be glucose or a (1-&gt;4)-alpha-D-glucan.. It catalyses the reaction Hydrolysis of (1-&gt;6)-alpha-D-glucosidic branch linkages in glycogen phosphorylase limit dextrin.. Its function is as follows. Multifunctional enzyme acting as 1,4-alpha-D-glucan:1,4-alpha-D-glucan 4-alpha-D-glycosyltransferase and amylo-1,6-glucosidase in glycogen degradation. The protein is Glycogen debranching enzyme of Equus caballus (Horse).